Consider the following 514-residue polypeptide: Contact site A protein (514 aa).

The first 19 residues, 1 to 19, serve as a signal peptide directing secretion; the sequence is MKFLLVLIILYNILNSAHS. Residues 20–453 form a globular region; it reads APTITAVSNG…EATTSTTYTI (434 aa). One can recognise an IPT/TIG 1 domain in the interval 21 to 104; the sequence is PTITAVSNGK…TGGNGLFKYT (84 aa). N-linked (GlcNAc...) asparagine glycosylation is found at Asn-128, Asn-137, Asn-207, Asn-294, and Asn-399. The IPT/TIG 2 domain occupies 191 to 283; sequence PTITSITPLA…NQQPITFTYN (93 aa). Composition is skewed to low complexity over residues 446–475 and 483–494; these read TTSTTYTIPDTPTPTDTATPSPTPTETATP and STPEETEAPSSA. The interval 446-494 is disordered; sequence TTSTTYTIPDTPTPTDTATPSPTPTETATPSPTPKPTSTPEETEAPSSA. 2 tandem repeats follow at residues 462–469 and 472–479. Positions 462 to 479 are 2 X 8 AA repeats, Pro-rich; sequence TATPSPTPTETATPSPTP. The GPI-like-anchor amidated serine moiety is linked to residue Ser-492. Residues 493-514 constitute a propeptide, removed in mature form; it reads SATTLISPLSLIVIFISFVLLI.

In terms of processing, phosphorylated on serine and N-glycosylated with two types of oligosaccharide chains. Post-translationally, the GPI-like-anchor contains a phosphoceramide group, rather than a phosphatidyl group.

It is found in the cell membrane. Functionally, this cell-surface glycoprotein mediates cell-cell binding via homophilic interaction. The chain is Contact site A protein (csaA) from Dictyostelium discoideum (Social amoeba).